The sequence spans 274 residues: Large ribosomal subunit protein uL2 (274 aa).

Disordered regions lie at residues 1–23 and 222–242; these read MAIK…SFEE and GSAM…SPIG.

Belongs to the universal ribosomal protein uL2 family. As to quaternary structure, part of the 50S ribosomal subunit. Forms a bridge to the 30S subunit in the 70S ribosome.

In terms of biological role, one of the primary rRNA binding proteins. Required for association of the 30S and 50S subunits to form the 70S ribosome, for tRNA binding and peptide bond formation. It has been suggested to have peptidyltransferase activity; this is somewhat controversial. Makes several contacts with the 16S rRNA in the 70S ribosome. This chain is Large ribosomal subunit protein uL2, found in Dehalococcoides mccartyi (strain ATCC BAA-2266 / KCTC 15142 / 195) (Dehalococcoides ethenogenes (strain 195)).